A 447-amino-acid chain; its full sequence is Tubulin beta-2 chain (447 aa).

Glutamine 11, glutamate 69, serine 138, glycine 142, threonine 143, glycine 144, asparagine 204, and asparagine 226 together coordinate GTP. Residue glutamate 69 participates in Mg(2+) binding. Residues 419-428 (VSEYQQYQDA) show a composition bias toward polar residues. Residues 419 to 447 (VSEYQQYQDATSDEEGEYEDEDQEPEEDM) form a disordered region. The segment covering 429-447 (TSDEEGEYEDEDQEPEEDM) has biased composition (acidic residues).

The protein belongs to the tubulin family. As to quaternary structure, dimer of alpha and beta chains. A typical microtubule is a hollow water-filled tube with an outer diameter of 25 nm and an inner diameter of 15 nM. Alpha-beta heterodimers associate head-to-tail to form protofilaments running lengthwise along the microtubule wall with the beta-tubulin subunit facing the microtubule plus end conferring a structural polarity. Microtubules usually have 13 protofilaments but different protofilament numbers can be found in some organisms and specialized cells. Mg(2+) serves as cofactor.

The protein resides in the cytoplasm. It is found in the cytoskeleton. Tubulin is the major constituent of microtubules, a cylinder consisting of laterally associated linear protofilaments composed of alpha- and beta-tubulin heterodimers. Microtubules grow by the addition of GTP-tubulin dimers to the microtubule end, where a stabilizing cap forms. Below the cap, tubulin dimers are in GDP-bound state, owing to GTPase activity of alpha-tubulin. This Triticum aestivum (Wheat) protein is Tubulin beta-2 chain (TUBB2).